A 239-amino-acid polypeptide reads, in one-letter code: MGQKINPLGFRLGTTQNHHSFWFAQPKNYSEGLQEDKKIRNCIKNYIQKNRKKGSNRKIEADSSFEVITHNKKMDSGSSSEVITHIEIQKEIDTIHVIIHIGFPNLLKKKGAIEELEKDLQKEVNSVNQRLNIGIEKVKEPYRQPNILAEYIAFQLKNRVSFRKAMKKAIELTKKTDIKGVKVKIAGRLAGKEIARAECIKKGRLPLQTIRAKIDYCCYPIRTIYGVLGVKIWIFVDEE.

In terms of domain architecture, KH type-2 spans 43-139 (IKNYIQKNRK…RLNIGIEKVK (97 aa)).

This sequence belongs to the universal ribosomal protein uS3 family. As to quaternary structure, part of the 30S ribosomal subunit.

The protein resides in the plastid. The protein localises to the chloroplast. The chain is Small ribosomal subunit protein uS3c (rps3) from Oryza nivara (Indian wild rice).